Here is a 337-residue protein sequence, read N- to C-terminus: Probable poly [ADP-ribose] polymerase DDB_G0278045 (337 aa).

Positions 21-231 constitute a PARP catalytic domain; the sequence is KKWDIIYKQR…NNNKNKNKNN (211 aa). Low complexity predominate over residues 218-242; it reads NNTNNNNKNKNKNNNKNNNKNIKIQ. The interval 218-247 is disordered; the sequence is NNTNNNNKNKNKNNNKNNNKNIKIQNENKN.

The enzyme catalyses L-aspartyl-[protein] + NAD(+) = 4-O-(ADP-D-ribosyl)-L-aspartyl-[protein] + nicotinamide. The catalysed reaction is L-glutamyl-[protein] + NAD(+) = 5-O-(ADP-D-ribosyl)-L-glutamyl-[protein] + nicotinamide. It catalyses the reaction NAD(+) + (ADP-D-ribosyl)n-acceptor = nicotinamide + (ADP-D-ribosyl)n+1-acceptor + H(+).. The protein is Probable poly [ADP-ribose] polymerase DDB_G0278045 of Dictyostelium discoideum (Social amoeba).